Here is a 558-residue protein sequence, read N- to C-terminus: MTEPVAAEVGRDFIRDIIQADLDQAKYREIVTRFPPEPNGYLHIGHAKSIALNFGIAQEFPGRCHLRFDDTNPVKEEQEYIDSIQADVHWLGFDWGKNLFFASDYFDRLYEWAETLIRDGLAYVDDQTQEEIRTSRGTLTEPGKNSPFRDRSVDENLDLFRRMKAGEFPNGARVLRAKIDMAAGNINLRDPVLYRILHAHHPRTGNAWCIYPSYDYAHGQSDAIEGITHSICTLEFEDHRPLYDWFIEKLPVPSKPHQYEFARLNLTYTLLSKRVLTQLVREGHVAGWDDPRMPTMAGMRRRGVPPAALREFVKRIGVAKANSVVDVGMLEFCIREELNRTAQRRMAVLKPLKVVIENYPEGQTEELEAINHPDDPSAGTRKITFGRELYIEQDDFMENPPKKFFRLSPGNEVRLRYAYFVKCTGVIKNESGEVVELRCTYDPATRGGNAPDGRKVKATMHWLSAAASKPAEIRIYNQLFANPSPDASNFAADLNPQSLEILSNARVEASVAESNSTEPMQFERQGYFVRDKDSTPGKPVFSRTIGLRDTFAKEVAKG.

A 'HIGH' region motif is present at residues 36–46 (PEPNGYLHIGH). Residues 37 to 39 (EPN) and 43 to 49 (HIGHAKS) contribute to the ATP site. Residues Asp69 and Tyr214 each coordinate L-glutamine. ATP is bound by residues Thr233, 263–264 (RL), and 271–273 (LSK). The 'KMSKS' region signature appears at 270–274 (LLSKR).

Belongs to the class-I aminoacyl-tRNA synthetase family. Monomer.

It localises to the cytoplasm. The catalysed reaction is tRNA(Gln) + L-glutamine + ATP = L-glutaminyl-tRNA(Gln) + AMP + diphosphate. In Bradyrhizobium diazoefficiens (strain JCM 10833 / BCRC 13528 / IAM 13628 / NBRC 14792 / USDA 110), this protein is Glutamine--tRNA ligase.